The chain runs to 432 residues: Glutamyl-tRNA reductase (432 aa).

Residues 49–52, S109, 114–116, and Q120 each bind substrate; these read TCNR and EGQ. Residue C50 is the Nucleophile of the active site. Residue 189–194 participates in NADP(+) binding; sequence GAGKMS.

This sequence belongs to the glutamyl-tRNA reductase family. Homodimer.

It catalyses the reaction (S)-4-amino-5-oxopentanoate + tRNA(Glu) + NADP(+) = L-glutamyl-tRNA(Glu) + NADPH + H(+). It functions in the pathway porphyrin-containing compound metabolism; protoporphyrin-IX biosynthesis; 5-aminolevulinate from L-glutamyl-tRNA(Glu): step 1/2. Its pathway is porphyrin-containing compound metabolism; chlorophyll biosynthesis. Catalyzes the NADPH-dependent reduction of glutamyl-tRNA(Glu) to glutamate 1-semialdehyde (GSA). In Cyanothece sp. (strain PCC 7425 / ATCC 29141), this protein is Glutamyl-tRNA reductase.